A 527-amino-acid polypeptide reads, in one-letter code: MRLRNFYSALALSAAVFAGPLYAAAPAMAAGTISGGFDVGPGGFQGNFNPLAATGGFTWLVTYFEPLVIYDDKLENIVGDLAKSFEISPDQLTYTFKLAHAKWHDGEPFTSKDAKFTFDLARNGKTGSVFAARLASIASVETPDEKTVVIKLKEPSPSMLDTLTKVMMLPEHALASIPPEQLAKNAWWSSTPIGTGPFKFNKYVADQYVELTANPDYRGGRPQVDKLINRYFADPAAAIAALRSGEIQFTYVDSNDVSTFSSDSAFRVIEGDSFVVNYVGFNQEVPLWKDLKVRQAFMHAINRDAIIQSLYGGAAKPANCVYVADRLVPKAIDAYAYDPQKARQLLDEAGWDKINGSKPITILTYYNSPLVANVLAAMQAMLAQVGINIVPRTVDTPTYNSIVYKQGGTADEFPLIFAGLQNGPDPSSINIGLNEKQIPPAGSNIMRIRMPAVTKALDAALAETNPAKRDARYQDVCKATNANLPWGTMWVANRYGVASSKLENFIWTPAPAGGPYQAHPEKWSILE.

A signal peptide spans 1 to 23 (MRLRNFYSALALSAAVFAGPLYA).

This sequence belongs to the bacterial solute-binding protein 5 family. As to quaternary structure, the complex is composed of two ATP-binding proteins (BMEII0863 and BMEII0864), two transmembrane proteins (BMEII0860 and BMEII0861) and a solute-binding protein (BMEII0859).

It is found in the periplasm. Probably part of an ABC transporter complex that could be involved in peptide import. This Brucella melitensis biotype 1 (strain ATCC 23456 / CCUG 17765 / NCTC 10094 / 16M) protein is Putative ABC transporter peptide-binding protein BMEII0859.